Here is a 201-residue protein sequence, read N- to C-terminus: Ubiquinone biosynthesis accessory factor UbiJ (201 aa).

One can recognise an SCP2 domain in the interval 15-112 (LNTFLYRSPA…QVVQNFVALA (98 aa)).

It belongs to the UbiJ family. Component of the Ubi complex metabolon, which regroups five ubiquinone biosynthesis proteins (UbiE, UbiF, UbiG, UbiH and UbiI) and two accessory factors (UbiK and the lipid-binding protein UbiJ). Interacts with UbiK and forms a complex composed of 2 UbiK subunits and 1 UbiJ subunit. The UbiK-UbiJ complex interacts with palmitoleic acid.

The protein localises to the cytoplasm. The protein operates within cofactor biosynthesis; ubiquinone biosynthesis. In terms of biological role, required for ubiquinone (coenzyme Q) biosynthesis under aerobic conditions. Binds hydrophobic ubiquinone biosynthetic intermediates via its SCP2 domain and is essential for the stability of the Ubi complex. May constitute a docking platform where Ubi enzymes assemble and access their SCP2-bound polyprenyl substrates. The polypeptide is Ubiquinone biosynthesis accessory factor UbiJ (Escherichia coli (strain K12)).